We begin with the raw amino-acid sequence, 244 residues long: Small ribosomal subunit protein uS2 (244 aa).

Belongs to the universal ribosomal protein uS2 family.

This is Small ribosomal subunit protein uS2 from Psychromonas ingrahamii (strain DSM 17664 / CCUG 51855 / 37).